A 106-amino-acid chain; its full sequence is Pyrimidine/purine nucleoside phosphorylase (106 aa).

It belongs to the nucleoside phosphorylase PpnP family.

It catalyses the reaction a purine D-ribonucleoside + phosphate = a purine nucleobase + alpha-D-ribose 1-phosphate. It carries out the reaction adenosine + phosphate = alpha-D-ribose 1-phosphate + adenine. The enzyme catalyses cytidine + phosphate = cytosine + alpha-D-ribose 1-phosphate. The catalysed reaction is guanosine + phosphate = alpha-D-ribose 1-phosphate + guanine. It catalyses the reaction inosine + phosphate = alpha-D-ribose 1-phosphate + hypoxanthine. It carries out the reaction thymidine + phosphate = 2-deoxy-alpha-D-ribose 1-phosphate + thymine. The enzyme catalyses uridine + phosphate = alpha-D-ribose 1-phosphate + uracil. The catalysed reaction is xanthosine + phosphate = alpha-D-ribose 1-phosphate + xanthine. In terms of biological role, catalyzes the phosphorolysis of diverse nucleosides, yielding D-ribose 1-phosphate and the respective free bases. Can use uridine, adenosine, guanosine, cytidine, thymidine, inosine and xanthosine as substrates. Also catalyzes the reverse reactions. The protein is Pyrimidine/purine nucleoside phosphorylase of Burkholderia vietnamiensis (strain G4 / LMG 22486) (Burkholderia cepacia (strain R1808)).